A 366-amino-acid chain; its full sequence is Fructose-bisphosphate aldolase 1 (366 aa).

Substrate is bound by residues R56 and K147. Residue E189 is the Proton acceptor of the active site. The active-site Schiff-base intermediate with dihydroxyacetone-P is K231.

It belongs to the class I fructose-bisphosphate aldolase family. Ubiquitous.

The enzyme catalyses beta-D-fructose 1,6-bisphosphate = D-glyceraldehyde 3-phosphate + dihydroxyacetone phosphate. The protein operates within carbohydrate degradation; glycolysis; D-glyceraldehyde 3-phosphate and glycerone phosphate from D-glucose: step 4/4. Functionally, may be involved in the metabolism of fructose-bisphosphate (beta-D-fructose 1,6-bisphosphate) and of fructose 1-phosphate. In Caenorhabditis elegans, this protein is Fructose-bisphosphate aldolase 1 (aldo-1).